Reading from the N-terminus, the 1210-residue chain is Ice nucleation protein (1210 aa).

Residues 165-1156 form an octapeptide periodicity region; that stretch reads AVYGSTLTGA…LSGGENSTLI (992 aa).

It belongs to the bacterial ice nucleation protein family.

It localises to the cell outer membrane. In terms of biological role, ice nucleation proteins enable bacteria to nucleate crystallization in supercooled water. The chain is Ice nucleation protein (inaW) from Pseudomonas fluorescens.